A 377-amino-acid polypeptide reads, in one-letter code: Ribosomal RNA large subunit methyltransferase G (377 aa).

The protein belongs to the methyltransferase superfamily. RlmG family.

The protein localises to the cytoplasm. The enzyme catalyses guanosine(1835) in 23S rRNA + S-adenosyl-L-methionine = N(2)-methylguanosine(1835) in 23S rRNA + S-adenosyl-L-homocysteine + H(+). In terms of biological role, specifically methylates the guanine in position 1835 (m2G1835) of 23S rRNA. This Shewanella sp. (strain MR-4) protein is Ribosomal RNA large subunit methyltransferase G.